A 926-amino-acid polypeptide reads, in one-letter code: MPLRLEIKRKLAQRSERVKSVDLHPTEPWILASLYSGTLCIWNYQTQVMAKSFEVTELPVRSAKFVARKQWVVAGADDMYIRVYNYNTMDKVKVFEAHSDYIRCVAVHPTLPYVLSSSDDMLIKLWDWEKGWACTQIFEGHSHYVMQVTFNPKDTNTFASASLDRTIKIWNLGSPDPNFTLDAHQKGVNCVDYFTGGDKPYLITGSDDHTAKVWDYQTKSCVQTLEGHTHNVSAVCFHPELPIIITGSEDGTVRIWHATTYRLENTLNYGLERVWAIGYIKSSRRVVIGYDEGTIMVKLGREIPVASMDNTGKIIWAKHNEIQTANIKSIGADYEVTDGERLPLSVKELGTCDLYPQSLKHNPNGRFVVVCGDGEYIIYTALAWRNRSFGSGLEFVWSSEGECAVRESSSKIKIFSKNFQEKRSIRPTFSAEKIFGGTLLAMCSSDFICFYDWAECRLIQRIDVTVKNLYWADSGDLVAIASDTSFYILKFNRDLVTSHFDSGRPTEEEGVEDAFEVLHENDERVRTGIWVGDCFIYNNSSWKLNYCVGGEVTTMYHLDRPMYLLGYLASQSRVFLVDKEFNVIGYTLLLSLIEYKTLVMRGDLDKASEILPTIPKDQHNSVAHFLESRGMIEDALEIATDPDYRFELAIQLGRLEIAQEIAVEVQSESKWKQLGELAMSSGKLQMAEECMKYAMDLSGLLLLYSSLGDAEGVTKLATLAKEQGKNNVAFLCLFMLGKLEDCLQLLVESNRIPEAALMARSYLPSKVSEIVALWRKDLSKVNSKAAESLADPEEYSNLFEDWQVALSVEAKAVETRGVYTGAKDYPSHADKSSMTLVEAFRNLQVEEEESLENGDMDHEEVVAEENGNEQRNEDDVAEHVEEHHEEKEAEEEEGIVDGDSTDGAVLVNGSEADEEWGTNNEGNPSA.

9 WD repeats span residues 13–52 (QRSE…MAKS), 55–94 (VTEL…KVKV), 97–136 (AHSD…ACTQ), 140–180 (GHSH…PNFT), 183–224 (AHQK…CVQT), 227–266 (GHTH…LENT), 269–309 (YGLE…ASMD), 351–390 (TCDL…RSFG), and 461–501 (RIDV…SHFD). The interval 847-926 (EEESLENGDM…GTNNEGNPSA (80 aa)) is disordered. The span at 868-887 (NEQRNEDDVAEHVEEHHEEK) shows a compositional bias: basic and acidic residues. Residues 888–900 (EAEEEEGIVDGDS) are compositionally biased toward acidic residues. A compositionally biased stretch (polar residues) spans 917-926 (GTNNEGNPSA).

It belongs to the WD repeat COPB2 family. In terms of assembly, oligomeric complex that consists of at least the alpha, beta, beta', gamma, delta, epsilon and zeta subunits.

It is found in the cytoplasm. It localises to the golgi apparatus membrane. The protein resides in the cytoplasmic vesicle. The protein localises to the COPI-coated vesicle membrane. Its function is as follows. The coatomer is a cytosolic protein complex that binds to dilysine motifs and reversibly associates with Golgi non-clathrin-coated vesicles, which further mediate biosynthetic protein transport from the ER, via the Golgi up to the trans Golgi network. Coatomer complex is required for budding from Golgi membranes, and is essential for the retrograde Golgi-to-ER transport of dilysine-tagged proteins. In Arabidopsis thaliana (Mouse-ear cress), this protein is Coatomer subunit beta'-2.